The chain runs to 230 residues: 6-carboxyhexanoate--CoA ligase (230 aa).

This sequence belongs to the BioW family. In terms of assembly, homodimer. Mg(2+) serves as cofactor.

It catalyses the reaction heptanedioate + ATP + CoA = 6-carboxyhexanoyl-CoA + AMP + diphosphate. Its pathway is metabolic intermediate metabolism; pimeloyl-CoA biosynthesis; pimeloyl-CoA from pimelate: step 1/1. In terms of biological role, catalyzes the transformation of pimelate into pimeloyl-CoA with concomitant hydrolysis of ATP to AMP. The protein is 6-carboxyhexanoate--CoA ligase of Staphylococcus aureus (strain Mu3 / ATCC 700698).